The sequence spans 349 residues: tRNA pseudouridine synthase D (349 aa).

Residue Phe27 coordinates substrate. The Nucleophile role is filled by Asp80. Asn129 is a binding site for substrate. One can recognise a TRUD domain in the interval 155–303; the sequence is GVPNYFGAQR…VEAARRAMLL (149 aa). Phe329 lines the substrate pocket.

The protein belongs to the pseudouridine synthase TruD family.

It catalyses the reaction uridine(13) in tRNA = pseudouridine(13) in tRNA. Its function is as follows. Responsible for synthesis of pseudouridine from uracil-13 in transfer RNAs. This chain is tRNA pseudouridine synthase D, found in Shigella sonnei (strain Ss046).